Reading from the N-terminus, the 188-residue chain is Nicotinamide-nucleotide adenylyltransferase (188 aa).

The protein belongs to the archaeal NMN adenylyltransferase family.

Its subcellular location is the cytoplasm. The catalysed reaction is beta-nicotinamide D-ribonucleotide + ATP + H(+) = diphosphate + NAD(+). It functions in the pathway cofactor biosynthesis; NAD(+) biosynthesis; NAD(+) from nicotinamide D-ribonucleotide: step 1/1. The chain is Nicotinamide-nucleotide adenylyltransferase from Thermococcus kodakarensis (strain ATCC BAA-918 / JCM 12380 / KOD1) (Pyrococcus kodakaraensis (strain KOD1)).